A 309-amino-acid chain; its full sequence is MKISLVVPVFNEEEAIPVFYKTVREFQELKPYEVEIVFINDGSKDATESIINALAVSDPLVVPLSFTRNFGKEPALFAGLDHASGDAVIPIDVDLQDPIEVIPHLIEKWQAGADMVLAKRSDRSTDGRLKRKTAEWFYKLHNKISTPKIEENVGDFRLMSREVVENIKLLPERNLFMKGILSWVGGQTDVVEYVRAERVAGISKFNGWKLWNLALEGITSFSTFPLRVWTYIGLFVASISFLYGAWMIIDTLVFGNPVRGYPSLLVSILFLGGVQLIGIGVLGEYIGRIYIEVKNRPKYIIKKSHRGNP.

2 helical membrane-spanning segments follow: residues 229 to 249 and 263 to 283; these read WTYIGLFVASISFLYGAWMII and SLLVSILFLGGVQLIGIGVLG.

The protein belongs to the glycosyltransferase 2 family. GtrB subfamily.

It localises to the cell membrane. Functionally, involved in O antigen modification. Catalyzes the transfer of the glucose residue from UDP-glucose to a lipid carrier. The sequence is that of SfII prophage-derived bactoprenol glucosyl transferase (gtrB) from Shigella flexneri.